The sequence spans 204 residues: Sperm acrosome developmental regulator (204 aa).

Residue S65 is modified to Phosphoserine. Basic residues predominate over residues 172-184 (RRQERRRRHHLRA). The tract at residues 172 to 204 (RRQERRRRHHLRAHMGPQPDPAQGLKQDARSPL) is disordered.

It localises to the cytoplasmic vesicle. The protein resides in the secretory vesicle. Its subcellular location is the acrosome. May play an important role in acrosome formation and nucleus shaping during spermiogenesis. This chain is Sperm acrosome developmental regulator (SPACDR), found in Bos taurus (Bovine).